The primary structure comprises 470 residues: DNA primase large subunit (470 aa).

[4Fe-4S] cluster contacts are provided by Cys-279, Cys-358, Cys-376, and Cys-414. Positions 449–470 (EEKKSAKQSNNKENENQSIDEK) are disordered.

This sequence belongs to the eukaryotic-type primase large subunit family. As to quaternary structure, heterodimer of a small subunit and a large subunit. [4Fe-4S] cluster is required as a cofactor.

DNA primase is the polymerase that synthesizes small RNA primers for the Okazaki fragments made during discontinuous DNA replication. The chain is DNA primase large subunit (prim2) from Dictyostelium discoideum (Social amoeba).